A 552-amino-acid polypeptide reads, in one-letter code: Hyaluronan synthase 2 (552 aa).

The Cytoplasmic portion of the chain corresponds to 1–11; sequence MHCERFLCILR. A helical membrane pass occupies residues 12 to 32; sequence IIGTTLFGVSLLLGITAAYIV. The Extracellular portion of the chain corresponds to 33–45; sequence GYQFIQTDNYYFS. A helical transmembrane segment spans residues 46–66; that stretch reads FGLYGAFLASHLIIQSLFAFL. Over 67–374 the chain is Cytoplasmic; sequence EHRKMKKSLE…NAMWFHKHHL (308 aa). Position 110 is a phosphothreonine (Thr110). Lys190 is covalently cross-linked (Glycyl lysine isopeptide (Lys-Gly) (interchain with G-Cter in ubiquitin)). The O-linked (GlcNAc) serine glycan is linked to Ser221. Phosphothreonine is present on Thr328. A helical membrane pass occupies residues 375–395; that stretch reads WMTYEAIITGFFPFFLIATVI. Topologically, residues 396-402 are extracellular; the sequence is QLFYRGK. A helical membrane pass occupies residues 403–423; sequence IWNILLFLLTVQLVGLIKSSF. Residues 424–429 are Cytoplasmic-facing; that stretch reads ASCLRG. Residues 430-450 form a helical membrane-spanning segment; that stretch reads NIVMVFMSLYSVLYMSSLLPA. Topologically, residues 451–475 are extracellular; that stretch reads KMFAIATINKAGWGTSGRKTIVVNF. A helical membrane pass occupies residues 476 to 496; sequence IGLIPVSVWFTILLGGVIFTI. Topologically, residues 497–510 are cytoplasmic; that stretch reads YKESKRPFSESKQT. A helical transmembrane segment spans residues 511-531; it reads VLIVGTLLYACYWVMLLTLYV. Residues 532 to 552 lie on the Extracellular side of the membrane; it reads VLINKCGRRKKGQQYDMVLDV.

This sequence belongs to the NodC/HAS family. In terms of assembly, homodimer; dimerization promotes enzymatic activity. Forms heterodimer with HAS3. Forms heterodimer with HAS1. Mg(2+) serves as cofactor. In terms of processing, phosphorylation at Thr-328 is essential for hyaluronan synthase activity. Phosphorylation at Thr-110 is required for transport from ER to Golgi. Post-translationally, O-GlcNAcylation at Ser-221 increases the stability of HAS2 and plasma membrane localization. Ubiquitination at Lys-190; this ubiquitination is essential for hyaluronan synthase activity and homo- or hetero-oligomerization. Can also be poly-ubiquitinated. Deubiquitinated by USP17 and USP4. USP17 efficiently removes 'Lys-63'- and 'Lys-48'-linked polyubiquitin chains, whereas USP4 preferentially removes monoubiquitination and, partially, both 'Lys-63'- and 'Lys-48'-linked polyubiquitin chain. As to expression, expressed in fibroblasts.

The protein resides in the cell membrane. Its subcellular location is the endoplasmic reticulum membrane. The protein localises to the vesicle. It localises to the golgi apparatus membrane. It is found in the lysosome. The enzyme catalyses [hyaluronan](n) + UDP-N-acetyl-alpha-D-glucosamine = N-acetyl-beta-D-glucosaminyl-(1-&gt;4)-[hyaluronan](n) + UDP + H(+). It catalyses the reaction N-acetyl-beta-D-glucosaminyl-(1-&gt;4)-[hyaluronan](n) + UDP-alpha-D-glucuronate = [hyaluronan](n+1) + UDP + H(+). It participates in glycan biosynthesis; hyaluronan biosynthesis. Its activity is regulated as follows. Regulated by several post-translational modifications such as ubiquitination/deubiquitination, phosphorylation and O-GlcNAcylation. The enzymatic activity depends on the availability of UDP-GlcUA and UDP-GlcNAc. Catalyzes the addition of GlcNAc or GlcUA monosaccharides to the nascent hyaluronan polymer. Therefore, it is essential to hyaluronan synthesis a major component of most extracellular matrices that has a structural role in tissues architectures and regulates cell adhesion, migration and differentiation. This is one of three isoenzymes responsible for cellular hyaluronan synthesis and it is particularly responsible for the synthesis of high molecular mass hyaluronan. The sequence is that of Hyaluronan synthase 2 from Homo sapiens (Human).